Reading from the N-terminus, the 230-residue chain is Large ribosomal subunit protein uL1 (230 aa).

It belongs to the universal ribosomal protein uL1 family. Part of the 50S ribosomal subunit.

Binds directly to 23S rRNA. The L1 stalk is quite mobile in the ribosome, and is involved in E site tRNA release. Its function is as follows. Protein L1 is also a translational repressor protein, it controls the translation of the L11 operon by binding to its mRNA. This chain is Large ribosomal subunit protein uL1, found in Leuconostoc mesenteroides subsp. mesenteroides (strain ATCC 8293 / DSM 20343 / BCRC 11652 / CCM 1803 / JCM 6124 / NCDO 523 / NBRC 100496 / NCIMB 8023 / NCTC 12954 / NRRL B-1118 / 37Y).